Reading from the N-terminus, the 446-residue chain is Probable 1,4-beta-D-glucan cellobiohydrolase A (446 aa).

The signal sequence occupies residues 1 to 17; that stretch reads MYQRALLFSALLSVSRA. A glycan (N-linked (GlcNAc...) asparagine) is linked at Asn-81. Glu-226 (nucleophile) is an active-site residue. Glu-231 (proton donor) is an active-site residue. Asn-284 and Asn-333 each carry an N-linked (GlcNAc...) asparagine glycan. Residues 399-420 are disordered; that stretch reads TDADPSQPGVARGTCEQGAGDP.

Belongs to the glycosyl hydrolase 7 (cellulase C) family.

The protein resides in the secreted. It carries out the reaction Hydrolysis of (1-&gt;4)-beta-D-glucosidic linkages in cellulose and cellotetraose, releasing cellobiose from the non-reducing ends of the chains.. In terms of biological role, the biological conversion of cellulose to glucose generally requires three types of hydrolytic enzymes: (1) Endoglucanases which cut internal beta-1,4-glucosidic bonds; (2) Exocellobiohydrolases that cut the disaccharide cellobiose from the non-reducing end of the cellulose polymer chain; (3) Beta-1,4-glucosidases which hydrolyze the cellobiose and other short cello-oligosaccharides to glucose. The polypeptide is Probable 1,4-beta-D-glucan cellobiohydrolase A (cbhA) (Emericella nidulans (strain FGSC A4 / ATCC 38163 / CBS 112.46 / NRRL 194 / M139) (Aspergillus nidulans)).